The primary structure comprises 658 residues: Carnitine O-palmitoyltransferase 2, mitochondrial (658 aa).

The transit peptide at 1–25 (MVPRLLLRAWPRGPAVGPGAPSRPL) directs the protein to the mitochondrion. Residues 26-178 (SAGSGPGQYL…GLLEPEVFHL (153 aa)) are Mitochondrial matrix-facing. K69 carries the post-translational modification N6-succinyllysine. At K79 the chain carries N6-acetyllysine. K85 carries the post-translational modification N6-succinyllysine. The note=Mitochondrial inner membrane intramembrane region spans 179-208 (NPAKSDTDTFKRLIRFVPSSLSWYGAYLVN). Over 209 to 658 (AYPLDMSQYF…DALEGKSIKS (450 aa)) the chain is Mitochondrial matrix. The residue at position 239 (K239) is an N6-acetyllysine; alternate. Position 239 is an N6-succinyllysine; alternate (K239). The residue at position 305 (K305) is an N6-acetyllysine. H372 serves as the catalytic Proton acceptor. K418 carries the N6-acetyllysine; alternate modification. K418 carries the N6-succinyllysine; alternate modification. N6-succinyllysine occurs at positions 424 and 439. 452 to 464 (GKEFLKKQKLSPD) is a CoA binding site. 3 residues coordinate (R)-carnitine: Y486, S488, and T499. 2 positions are modified to N6-acetyllysine; alternate: K510 and K544. K510 and K544 each carry N6-succinyllysine; alternate.

Belongs to the carnitine/choline acetyltransferase family.

It is found in the mitochondrion inner membrane. It catalyses the reaction (R)-carnitine + hexadecanoyl-CoA = O-hexadecanoyl-(R)-carnitine + CoA. It carries out the reaction octanoyl-CoA + (R)-carnitine = O-octanoyl-(R)-carnitine + CoA. The catalysed reaction is decanoyl-CoA + (R)-carnitine = O-decanoyl-(R)-carnitine + CoA. The enzyme catalyses dodecanoyl-CoA + (R)-carnitine = O-dodecanoyl-R-carnitine + CoA. It catalyses the reaction tetradecanoyl-CoA + (R)-carnitine = O-tetradecanoyl-(R)-carnitine + CoA. It carries out the reaction (R)-carnitine + octadecanoyl-CoA = O-octadecanoyl-(R)-carnitine + CoA. The catalysed reaction is eicosanoyl-CoA + (R)-carnitine = O-eicosanoyl-(R)-carnitine + CoA. The enzyme catalyses (9Z)-tetradecenoyl-CoA + (R)-carnitine = O-(9Z)-tetradecenoyl-(R)-carnitine + CoA. It catalyses the reaction (5Z)-tetradecenoyl-CoA + (R)-carnitine = O-(5Z)-tetradecenoyl-(R)-carnitine + CoA. It carries out the reaction (R)-carnitine + (9Z)-octadecenoyl-CoA = O-(9Z)-octadecenoyl-(R)-carnitine + CoA. The catalysed reaction is 4,8-dimethylnonanoyl-CoA + (R)-carnitine = O-4,8-dimethylnonanoyl-(R)-carnitine + CoA. It functions in the pathway lipid metabolism; fatty acid beta-oxidation. In terms of biological role, involved in the intramitochondrial synthesis of acylcarnitines from accumulated acyl-CoA metabolites. Reconverts acylcarnitines back into the respective acyl-CoA esters that can then undergo beta-oxidation, an essential step for the mitochondrial uptake of long-chain fatty acids and their subsequent beta-oxidation in the mitochondrion. Active with medium (C8-C12) and long-chain (C14-C18) acyl-CoA esters. This chain is Carnitine O-palmitoyltransferase 2, mitochondrial (CPT2), found in Macaca fascicularis (Crab-eating macaque).